The sequence spans 77 residues: Protein RADIALIS-like 4 (77 aa).

The 56-residue stretch at 6–61 (MSTSSWTAREDKQFEMALAKFDKDTPDRWQKIARAVGGKSTEEVKRHYELLLRDVN) folds into the SANT domain.

In terms of tissue distribution, expressed just outside the vascular bundles in the rosette stem and the leaf traces. Not detected in floral primordia.

It is found in the nucleus. Functionally, probable transcription factor. The sequence is that of Protein RADIALIS-like 4 (RL4) from Arabidopsis thaliana (Mouse-ear cress).